The chain runs to 65 residues: MNKLYRSEKNKKIAGVIGGLAEYFNWDASLLRVITVILAIMTSVLPVLLIYIIWIFIVPSERDMK.

The helical transmembrane segment at 37 to 57 threads the bilayer; it reads ILAIMTSVLPVLLIYIIWIFI.

It localises to the cell membrane. This is an uncharacterized protein from Bacillus subtilis (strain 168).